Reading from the N-terminus, the 393-residue chain is Arginine biosynthesis bifunctional protein ArgJ (393 aa).

Substrate is bound by residues T142, K168, T179, E265, N388, and T393. T179 acts as the Nucleophile in catalysis.

It belongs to the ArgJ family. Heterotetramer of two alpha and two beta chains.

Its subcellular location is the cytoplasm. It catalyses the reaction N(2)-acetyl-L-ornithine + L-glutamate = N-acetyl-L-glutamate + L-ornithine. The catalysed reaction is L-glutamate + acetyl-CoA = N-acetyl-L-glutamate + CoA + H(+). Its pathway is amino-acid biosynthesis; L-arginine biosynthesis; L-ornithine and N-acetyl-L-glutamate from L-glutamate and N(2)-acetyl-L-ornithine (cyclic): step 1/1. The protein operates within amino-acid biosynthesis; L-arginine biosynthesis; N(2)-acetyl-L-ornithine from L-glutamate: step 1/4. Functionally, catalyzes two activities which are involved in the cyclic version of arginine biosynthesis: the synthesis of N-acetylglutamate from glutamate and acetyl-CoA as the acetyl donor, and of ornithine by transacetylation between N(2)-acetylornithine and glutamate. This is Arginine biosynthesis bifunctional protein ArgJ from Geobacter sulfurreducens (strain ATCC 51573 / DSM 12127 / PCA).